The following is a 489-amino-acid chain: Protein LMBR1L (489 aa).

Residues M1–R21 lie on the Extracellular side of the membrane. The segment at M1–T59 is interaction with LGB. The segment at M1 to L76 is LCN1-binding. A helical transmembrane segment spans residues E22–T42. The Cytoplasmic portion of the chain corresponds to R43–E66. Residues L67–I87 form a helical membrane-spanning segment. Topologically, residues S88–N114 are extracellular. Residues L115 to T135 form a helical membrane-spanning segment. At E136–T154 the chain is on the cytoplasmic side. The chain crosses the membrane as a helical span at residues V155–I175. Topologically, residues V176–Y196 are extracellular. Residues L197–L217 form a helical membrane-spanning segment. Topologically, residues A218–C305 are cytoplasmic. The chain crosses the membrane as a helical span at residues L306–I326. Residues D327–S350 are Extracellular-facing. The helical transmembrane segment at F351 to F371 threads the bilayer. Residues Y372–A388 are Cytoplasmic-facing. The helical transmembrane segment at M389–F409 threads the bilayer. Topologically, residues S410–G431 are extracellular. Residues N432–V452 form a helical membrane-spanning segment. The Cytoplasmic segment spans residues K453–Q489.

Belongs to the LIMR family. Dimer. Can also form higher oligomers. Interacts with LCN1; this interaction mediates the endocytosis of LCN1. Interacts with UBAC2, FAF2, VCP, AMFR, ZNRF3, CTNNB1, LRP6, GSK3A, GSK3B, FZD6, DVL2 and RNF43. Interaction with LGB and SCGB1A1 is controversial.

Its subcellular location is the cell membrane. The protein localises to the endoplasmic reticulum membrane. Functionally, plays an essential role in lymphocyte development by negatively regulating the canonical Wnt signaling pathway. In association with UBAC2 and E3 ubiquitin-protein ligase AMFR, promotes the ubiquitin-mediated degradation of CTNNB1 and Wnt receptors FZD6 and LRP6. LMBR1L stabilizes the beta-catenin destruction complex that is required for regulating CTNNB1 levels. Acts as a LCN1 receptor and can mediate its endocytosis. The polypeptide is Protein LMBR1L (LMBR1L) (Macaca fascicularis (Crab-eating macaque)).